We begin with the raw amino-acid sequence, 460 residues long: Argininosuccinate lyase (460 aa).

Belongs to the lyase 1 family. Argininosuccinate lyase subfamily.

It is found in the cytoplasm. The catalysed reaction is 2-(N(omega)-L-arginino)succinate = fumarate + L-arginine. It participates in amino-acid biosynthesis; L-arginine biosynthesis; L-arginine from L-ornithine and carbamoyl phosphate: step 3/3. This chain is Argininosuccinate lyase, found in Nitratidesulfovibrio vulgaris (strain DSM 19637 / Miyazaki F) (Desulfovibrio vulgaris).